The following is a 123-amino-acid chain: Defensin beta 118 (123 aa).

The N-terminal stretch at 1-19 (MKLLLLALPILVLLPQVIP) is a signal peptide. Intrachain disulfides connect C27–C54, C34–C48, and C38–C55. Residues 65-123 (LPTTSPTPLSDSTPGIIDNILTIRFTTDYFEISSKKDMVEESEAGQGTQTSPPNVHHTS) constitute a propeptide that is removed on maturation. The disordered stretch occupies residues 100-123 (KDMVEESEAGQGTQTSPPNVHHTS). The segment covering 109–123 (GQGTQTSPPNVHHTS) has biased composition (polar residues).

This sequence belongs to the beta-defensin family. Post-translationally, the three-dimensional structure formed by the three intramolecular disulfide bridges is indispensable for antimicrobial activity. High-level and epididymis-specific expression. Most abundant in the epithelium of the caput and is also present in the lumen and bound to sperm.

The protein localises to the secreted. In terms of biological role, host defense peptide that exhibits antimicrobial activity against both Gram-negative bacteria, such as E.coli and S.typhimurium, and Gram-positive bacteria, such as S.aureus and B.subtilis. Inhibits cell adhesion of E.coli on intestinal epithelial enterocytes. Causes rapid permeabilization of both the outer and inner membrane of E.coli, leading to morphological alterations on the bacterial surface. Binds to bacterial lipopolysaccharides (LPS) with high affinity, and may thereby be involved in immunoregulation through LPS neutralization. May contribute to epididymal innate immunity and protect the sperm against attack by microorganisms. This chain is Defensin beta 118 (DEFB118), found in Macaca mulatta (Rhesus macaque).